A 145-amino-acid polypeptide reads, in one-letter code: MRTTYMAKPNEVERKWYVVDAAGKTLGRLASEVAALLRGKHKPTFTPHVDCGDHVIVINADKVELTGKKLTKKLYYRHSLHPGGLKVRTALEMRTNYPEQMIERAVRGMLPKGSLGRQMFKKLHVYRGSEHPHQAQKPEVYELRG.

It belongs to the universal ribosomal protein uL13 family. As to quaternary structure, part of the 50S ribosomal subunit.

Functionally, this protein is one of the early assembly proteins of the 50S ribosomal subunit, although it is not seen to bind rRNA by itself. It is important during the early stages of 50S assembly. This chain is Large ribosomal subunit protein uL13, found in Geobacillus thermodenitrificans (strain NG80-2).